The sequence spans 344 residues: MGLISYFASFLPDVPWHFWGSVDSLLQGLVGACAVSVLYNLMKVHLYIVCLNDPDKQKEAAQLRAQSPIMDFLHLSLLSLLFSLLGPRVGALVVLEFSLRAVSMVLSANKGAQSSQLFLLCQFSLGCGVSCSLDYLHEGAPHRTWNLLLAVGLSGLILWQSRRMCRHVGILYQLHSGERYCGVCLSLLACWRDIPPFLWRALKVAFWVSDLAAVAVINRDFLSTSEAMRFWTPLTICYTLLVIYMQEEQHQNPSEQMAYQTVFVRMGGLLILMMTVGRWADILHIFISLTGELWCLLHAGVMLRLCREQDFAERMSNPRKYPVSRAPKSTREGRTLQRETSLEE.

Transmembrane regions (helical) follow at residues 29 to 49 (LVGA…LYIV), 75 to 95 (LSLL…LVVL), 117 to 137 (LFLL…DYLH), 139 to 159 (GAPH…LILW), 197 to 217 (FLWR…VAVI), 230 to 246 (FWTP…IYMQ), 257 to 277 (MAYQ…MTVG), and 282 to 302 (ILHI…AGVM). The disordered stretch occupies residues 317–344 (NPRKYPVSRAPKSTREGRTLQRETSLEE). Positions 329–344 (STREGRTLQRETSLEE) are enriched in basic and acidic residues.

The protein belongs to the TMEM82 family.

Its subcellular location is the membrane. The polypeptide is Transmembrane protein 82 (tmem82) (Xenopus tropicalis (Western clawed frog)).